The following is a 919-amino-acid chain: MFS-type transporter clz9 (919 aa).

The span at 1 to 11 shows a compositional bias: polar residues; that stretch reads MAASTKPTTKL. Positions 1 to 33 are disordered; sequence MAASTKPTTKLSTEEDDVSRRDSESSADFMKSN. The helical transmembrane segment at 69-89 threads the bilayer; it reads VVASFAAAISPFSTSTYYPVV. A glycan (N-linked (GlcNAc...) asparagine) is linked at Asn-104. Transmembrane regions (helical) follow at residues 132-152, 192-212, and 222-242; these read PMFL…ALQN, LIYA…IGGL, and VFWF…IFFG. The N-linked (GlcNAc...) asparagine glycan is linked to Asn-260. 4 helical membrane-spanning segments follow: residues 303-323, 333-353, 393-413, and 418-438; these read FILS…TSVL, YDAV…LLAY, LGFV…YGWQ, and APLA…TGVM. A glycan (N-linked (GlcNAc...) asparagine) is linked at Asn-461. The helical transmembrane segment at 465–485 threads the bilayer; it reads LLLGAGAVAVVGPLNKSAGIG. The region spanning 641–809 is the DDE-1 domain; the sequence is REWVTLIQGI…FTSANICSSF (169 aa). The disordered stretch occupies residues 840-897; the sequence is EAPWEAKTPSNRKKKQIQKRGTLTKGEGEDTLAQKEADQQIEREQRQGGEQSGRSRQA. Positions 865-886 are enriched in basic and acidic residues; sequence GEGEDTLAQKEADQQIEREQRQ. Residues 887 to 896 are compositionally biased toward low complexity; it reads GGEQSGRSRQ. A glycan (N-linked (GlcNAc...) asparagine) is linked at Asn-915.

It belongs to the major facilitator superfamily. CAR1 family.

Its subcellular location is the membrane. Functionally, MFS-type transporter; part of the gene cluster that mediates the biosynthesis of squalestatin S1 (SQS1, also known as zaragozic acid A), a heavily oxidized fungal polyketide that offers potent cholesterol lowering activity by targeting squalene synthase (SS). This Cochliobolus lunatus (Filamentous fungus) protein is MFS-type transporter clz9.